A 410-amino-acid chain; its full sequence is Tryptophan synthase beta chain (410 aa).

Lys100 carries the post-translational modification N6-(pyridoxal phosphate)lysine.

The protein belongs to the TrpB family. As to quaternary structure, tetramer of two alpha and two beta chains. Pyridoxal 5'-phosphate serves as cofactor.

The enzyme catalyses (1S,2R)-1-C-(indol-3-yl)glycerol 3-phosphate + L-serine = D-glyceraldehyde 3-phosphate + L-tryptophan + H2O. It participates in amino-acid biosynthesis; L-tryptophan biosynthesis; L-tryptophan from chorismate: step 5/5. Its function is as follows. The beta subunit is responsible for the synthesis of L-tryptophan from indole and L-serine. The protein is Tryptophan synthase beta chain of Pyrobaculum aerophilum (strain ATCC 51768 / DSM 7523 / JCM 9630 / CIP 104966 / NBRC 100827 / IM2).